The primary structure comprises 339 residues: Dihydroorotate dehydrogenase (quinone) (339 aa).

FMN-binding positions include 62-66 (AGMDK) and Thr86. Lys66 serves as a coordination point for substrate. Residue 111–115 (NRMGF) participates in substrate binding. FMN-binding residues include Asn139 and Asn172. Residue Asn172 participates in substrate binding. The active-site Nucleophile is Ser175. Position 177 (Asn177) interacts with substrate. 2 residues coordinate FMN: Lys217 and Thr245. Residue 246–247 (NT) coordinates substrate. Residues Gly268, Gly297, and 318–319 (YS) contribute to the FMN site.

Belongs to the dihydroorotate dehydrogenase family. Type 2 subfamily. As to quaternary structure, monomer. Requires FMN as cofactor.

It is found in the cell membrane. It carries out the reaction (S)-dihydroorotate + a quinone = orotate + a quinol. Its pathway is pyrimidine metabolism; UMP biosynthesis via de novo pathway; orotate from (S)-dihydroorotate (quinone route): step 1/1. In terms of biological role, catalyzes the conversion of dihydroorotate to orotate with quinone as electron acceptor. This Shewanella baltica (strain OS155 / ATCC BAA-1091) protein is Dihydroorotate dehydrogenase (quinone).